Reading from the N-terminus, the 771-residue chain is Caldesmon (771 aa).

Disordered regions lie at residues 23–91 and 104–599; these read ERLS…ALLE and LQEA…FSPK. Positions 26–199 are myosin and calmodulin-binding; sequence SYQRNDDDEE…PKEVPTEENQ (174 aa). Tyrosine 27 carries the phosphotyrosine modification. 9 stretches are compositionally biased toward basic and acidic residues: residues 47 to 67, 104 to 115, 139 to 155, 170 to 194, 203 to 215, 240 to 435, 442 to 484, 509 to 518, and 525 to 592; these read QERLRQKEEGDVSGEVTEKSE, LQEALERQKEFD, ITGKEEKVETRQGRCEI, WRQDGEEEGKKEEKDSEEEKPKEVP, AVEKSTDKEEVVE, AADK…ESLP, SKKD…RELT, GSEKLKEKQQ, and DELK…EKKP. 10 tandem repeats follow at residues 251 to 265, 266 to 278, 279 to 291, 294 to 306, 309 to 321, 324 to 336, 337 to 349, 350 to 362, 363 to 375, and 378 to 390. Residues 251–390 form a 10 X 13 AA approximate tandem repeats region; sequence EREKLEAEEK…KRAAEEKARL (140 aa). A tropomyosin-binding region spans residues 523 to 580; it reads ELDELKKRREERRKILEEEEQKKKQEEAERKIREEEEKKRMKEEIERRRAEAAEKRQK. Position 597 is a phosphoserine; by CDK1 (serine 597). The interval 612-644 is strong actin-binding; the sequence is LNKSAQKSGMKPAHTTAVVSKIDSRLEQYTSAV. The segment at 622 to 632 is tropomyosin-binding; it reads KPAHTTAVVSK. Residue tyrosine 640 is modified to Phosphotyrosine. Residues 674–680 are calmodulin-binding; it reads WEKGNVF. Positions 676 to 771 are disordered; that stretch reads KGNVFSSPGG…NGLRQFEKEP (96 aa). The span at 679–691 shows a compositional bias: polar residues; sequence VFSSPGGTGTPNK. Serine 682 carries the phosphoserine; by CDK1 modification. 2 positions are modified to phosphothreonine; by CDK1: threonine 688 and threonine 711. At serine 717 the chain carries Phosphoserine; by CDK1. The segment covering 723-742 has biased composition (basic and acidic residues); that stretch reads SDLRPGDVSGKRNLWEKQSV. Positions 726–752 are weak actin-binding; sequence RPGDVSGKRNLWEKQSVEKPAASSSKV.

This sequence belongs to the caldesmon family. In terms of processing, phosphorylated in non-muscle cells. Phosphorylation by CDK1 during mitosis causes caldesmon to dissociate from microfilaments. Phosphorylation reduces caldesmon binding to actin, myosin, and calmodulin as well as its inhibition of actomyosin ATPase activity. Phosphorylation also occurs in both quiescent and dividing smooth muscle cells with similar effects on the interaction with actin and calmodulin and on microfilaments reorganization. As to expression, high-molecular-weight caldesmon (h-caldesmon) is predominantly expressed in smooth muscles, whereas low-molecular-weight caldesmon (l-caldesmon) is widely distributed in non-muscle tissues and cells. Not expressed in skeletal muscle or heart.

The protein resides in the cytoplasm. Its subcellular location is the cytoskeleton. The protein localises to the myofibril. It is found in the stress fiber. Actin- and myosin-binding protein implicated in the regulation of actomyosin interactions in smooth muscle and nonmuscle cells (could act as a bridge between myosin and actin filaments). Stimulates actin binding of tropomyosin which increases the stabilization of actin filament structure. In muscle tissues, inhibits the actomyosin ATPase by binding to F-actin. This inhibition is attenuated by calcium-calmodulin and is potentiated by tropomyosin. Interacts with actin, myosin, two molecules of tropomyosin and with calmodulin. Also plays an essential role during cellular mitosis and receptor capping. The sequence is that of Caldesmon (CALD1) from Gallus gallus (Chicken).